Here is a 348-residue protein sequence, read N- to C-terminus: NADH-quinone oxidoreductase subunit H (348 aa).

Helical transmembrane passes span 21-41, 87-107, 120-140, 166-186, 193-213, 258-278, 283-303, and 323-343; these read IIGILVIALPLMLAVAMIIYA, GLFLLAPIITFTVALIVWAVI, IGLLYVLAASSIGVYGVIIAG, IGFVLISVVLWTGSFNMSAIV, IFGFINGYGFNPLLFPMAVVF, NVILMCGLNAILFWGGWLPPV, LYMVPGIIWFFAKLLFFFFVF, and WKVFLPLSLFWVFLVSGWLML.

It belongs to the complex I subunit 1 family. As to quaternary structure, NDH-1 is composed of 14 different subunits. Subunits NuoA, H, J, K, L, M, N constitute the membrane sector of the complex.

It localises to the cell inner membrane. The enzyme catalyses a quinone + NADH + 5 H(+)(in) = a quinol + NAD(+) + 4 H(+)(out). Its function is as follows. NDH-1 shuttles electrons from NADH, via FMN and iron-sulfur (Fe-S) centers, to quinones in the respiratory chain. The immediate electron acceptor for the enzyme in this species is believed to be ubiquinone. Couples the redox reaction to proton translocation (for every two electrons transferred, four hydrogen ions are translocated across the cytoplasmic membrane), and thus conserves the redox energy in a proton gradient. This subunit may bind ubiquinone. The polypeptide is NADH-quinone oxidoreductase subunit H (Rhizorhabdus wittichii (strain DSM 6014 / CCUG 31198 / JCM 15750 / NBRC 105917 / EY 4224 / RW1) (Sphingomonas wittichii)).